Reading from the N-terminus, the 332-residue chain is Biotin synthase (332 aa).

Positions histidine 53–arginine 282 constitute a Radical SAM core domain. [4Fe-4S] cluster contacts are provided by cysteine 71, cysteine 75, and cysteine 78. [2Fe-2S] cluster is bound by residues cysteine 115, cysteine 147, cysteine 207, and arginine 277.

Belongs to the radical SAM superfamily. Biotin synthase family. As to quaternary structure, homodimer. [4Fe-4S] cluster serves as cofactor. Requires [2Fe-2S] cluster as cofactor.

The catalysed reaction is (4R,5S)-dethiobiotin + (sulfur carrier)-SH + 2 reduced [2Fe-2S]-[ferredoxin] + 2 S-adenosyl-L-methionine = (sulfur carrier)-H + biotin + 2 5'-deoxyadenosine + 2 L-methionine + 2 oxidized [2Fe-2S]-[ferredoxin]. It participates in cofactor biosynthesis; biotin biosynthesis; biotin from 7,8-diaminononanoate: step 2/2. Functionally, catalyzes the conversion of dethiobiotin (DTB) to biotin by the insertion of a sulfur atom into dethiobiotin via a radical-based mechanism. The polypeptide is Biotin synthase (Bacillus cereus (strain ATCC 10987 / NRS 248)).